The chain runs to 385 residues: Podocin (385 aa).

Residues 1-27 show a composition bias toward basic and acidic residues; it reads MDSRARSSSREAHGRSSRSSSRDDKKA. A disordered region spans residues 1 to 64; that stretch reads MDSRARSSSR…GEPRAPAATA (64 aa). Residues 1-104 lie on the Cytoplasmic side of the membrane; that stretch reads MDSRARSSSR…IKPSGLGACE (104 aa). The S-palmitoyl cysteine moiety is linked to residue cysteine 103. The helical transmembrane segment at 105–125 threads the bilayer; it reads WLLVLASLIFIIMTFPFSIWF. The Extracellular portion of the chain corresponds to 126-385; it reads CIKVVQEYER…NPKKKDSPML (260 aa). Residues 357–370 show a composition bias toward polar residues; it reads NRAQGSINYPSSSK. Residues 357 to 385 form a disordered region; it reads NRAQGSINYPSSSKPVEPLNPKKKDSPML. Over residues 376–385 the composition is skewed to basic and acidic residues; the sequence is NPKKKDSPML.

It belongs to the band 7/mec-2 family. In terms of assembly, interacts with nephrin/NPHS1, KIRRL1 and CD2AP. Interacts with DDN.

Its subcellular location is the membrane. Its function is as follows. Plays a role in the regulation of glomerular permeability, acting probably as a linker between the plasma membrane and the cytoskeleton. This chain is Podocin (Nphs2), found in Mus musculus (Mouse).